We begin with the raw amino-acid sequence, 242 residues long: Sugar fermentation stimulation protein homolog (242 aa).

It belongs to the SfsA family.

This is Sugar fermentation stimulation protein homolog from Rippkaea orientalis (strain PCC 8801 / RF-1) (Cyanothece sp. (strain PCC 8801)).